The chain runs to 515 residues: ATP synthase subunit alpha (515 aa).

171 to 178 (GDRQTGKT) contributes to the ATP binding site.

It belongs to the ATPase alpha/beta chains family. In terms of assembly, F-type ATPases have 2 components, CF(1) - the catalytic core - and CF(0) - the membrane proton channel. CF(1) has five subunits: alpha(3), beta(3), gamma(1), delta(1), epsilon(1). CF(0) has three main subunits: a(1), b(2) and c(9-12). The alpha and beta chains form an alternating ring which encloses part of the gamma chain. CF(1) is attached to CF(0) by a central stalk formed by the gamma and epsilon chains, while a peripheral stalk is formed by the delta and b chains.

It is found in the cell inner membrane. The catalysed reaction is ATP + H2O + 4 H(+)(in) = ADP + phosphate + 5 H(+)(out). Functionally, produces ATP from ADP in the presence of a proton gradient across the membrane. The alpha chain is a regulatory subunit. The chain is ATP synthase subunit alpha from Xanthomonas oryzae pv. oryzae (strain MAFF 311018).